Here is a 73-residue protein sequence, read N- to C-terminus: Potassium channel toxin alpha-KTx 27.1 (73 aa).

A signal peptide spans 1–23; it reads MKFLFLTLFVCCFIAVLVIPSEA.

This sequence belongs to the short scorpion toxin superfamily. Potassium channel inhibitor family. Alpha-KTx 27 subfamily. In terms of processing, contains 4 disulfide bonds. As to expression, expressed by the venom gland.

Its subcellular location is the secreted. This Buthus israelis (Israeli scorpion) protein is Potassium channel toxin alpha-KTx 27.1.